A 768-amino-acid polypeptide reads, in one-letter code: MTIRGLDNYLKERKLIQSCPISTLANTRLGIDATHYLNHLLTDPNSREPLVAATGGLPLAIISKIESDLRALERHAIKPVFVFAGLPLASRPPPKGPDIKAERENQIKNEAWALYDEGQAYSAVDKLVQFNNGNFVDQRDLLRSIMRLFRHRYVEFVVAPYLGIAQLAYLLQHPKGYIHAIYSSSECLMWPVERVITSSDWNNNFQFVEKVRILNDLNLTSEQFLDFGILAGSSLSRTIPLPQSEFSIKNIADLVRHHKSGISVCQNVRQEPPYKAQFYTESFWKARLAVKFSLVLTTEGACVPLPTVITPQQQAFTVQDVPGDLEEIFSPRIPDELYFHICRGLVSAQVVGWLTSGMIIEQQPLLETGEYRRFIKDVITEGPTSPRCTTIALLADILHPDWSKRRINVHYYFDPPYAPVRGAFVPFTDALTQSLIGRCSDWMVPMFNLEMELRRQNSSTIDLKLCIGALASEELVHRTFKPKGDRVLDKKDEVVANSLWRFLEVRGFVQQNHAHSLIGKALYAAYTVSRVNDRFQEPIYLILELLRAGVLHGGKWGGPEAAPLLGGPSFGDEDEQNSVRLIMRCISVLPLVSRNQQWVGPLSQELLAFNAFVRGLSKSLRQLFEAVSVHLLLSGDGRRNRDDYSDIMLSLPFQTDVNTGFGILAKSYLDATSYHNQLEPITEEMIGTEGAETAKRQAILFIEENFSSVKAPVQELERGFRFWDAVMVAIRCLAEEQGPNPKLAQTVVGRDVIEQFERADKWLKPMRP.

It belongs to the XPG/RAD2 endonuclease family. As to quaternary structure, interacts with PBP1.

The protein resides in the cytoplasm. Its subcellular location is the cytosol. Functionally, involved in 3'-UTR mediated RNA regulation. Complexes with PBP1 to promote mRNA interactions with poly(A)-binding protein. The protein is Post-transcriptional regulator MKT1 of Cryptococcus neoformans var. grubii serotype A (strain H99 / ATCC 208821 / CBS 10515 / FGSC 9487) (Filobasidiella neoformans var. grubii).